Reading from the N-terminus, the 322-residue chain is uncharacterized protein (322 aa).

The protein to M.jannaschii MJ0640 and MJ0799.

This is an uncharacterized protein from Synechocystis sp. (strain ATCC 27184 / PCC 6803 / Kazusa).